The chain runs to 2639 residues: BAH and coiled-coil domain-containing protein 1 (2639 aa).

12 disordered regions span residues 23–49, 84–107, 188–249, 669–702, 716–746, 939–1047, 1104–1331, 1457–1513, 1582–1666, 1722–1776, 1868–1893, and 2057–2119; these read SAAAAARLAPAGPAAQPPAHFQPGKYF, SAASTHPSGPSSSPPEQAYRGSHP, APAH…GKER, FLSSKGPGQSERPDCARSREHDTTHGDGEVRQPP, VSRSEAAYGTNTARQGRAAPAFKGGGGPRST, QRAA…QSTA, SDVH…HSSG, QREL…KKVK, KVKS…LGTE, EVKI…RDAL, FDDNSSFSEEEEDEEEEEEDSGPLSA, and KKVS…DHFL. Low complexity-rich tracts occupy residues 24–41 and 84–98; these read AAAAARLAPAGPAAQPPA and SAASTHPSGPSSSPP. 2 stretches are compositionally biased toward basic and acidic residues: residues 211 to 247 and 679 to 698; these read GPKDFDRFLVGKELGREKAGKAAEGKERPAAEEDGGK and ERPDCARSREHDTTHGDGEV. An N6-acetyllysine modification is found at Lys222. A compositionally biased stretch (basic and acidic residues) spans 946–964; that stretch reads RKPEDQHLDLEEPAQEKAP. Residues 972-988 show a composition bias toward low complexity; the sequence is ALTPTAPGAPSPAAGPT. Residues 989-1013 are compositionally biased toward pro residues; it reads KLPPCCHPPDPKPPASSPTPPPRPS. The span at 1106 to 1122 shows a compositional bias: polar residues; that stretch reads VHSSNLEDPETMQTTAP. A compositionally biased stretch (low complexity) spans 1182 to 1198; that stretch reads LEGLQELQCAALLEAGG. The span at 1212 to 1221 shows a compositional bias: basic and acidic residues; the sequence is AREERSREEG. Residues 1244 to 1275 are compositionally biased toward acidic residues; sequence LEDEGEQPAPEEDELEEDELGQQSMEDSEEDC. Positions 1307–1324 are enriched in pro residues; it reads DSPPDPQPPAASGPPSTV. The stretch at 1439 to 1473 forms a coiled coil; it reads EVGMRVRLAELQRRYKEKQRELARLQRKHDHERDE. A compositionally biased stretch (basic and acidic residues) spans 1457 to 1475; the sequence is QRELARLQRKHDHERDESS. Residues 1478–1492 show a composition bias toward basic residues; it reads PARRGPGRPRKRKHS. The segment covering 1751-1761 has biased composition (basic residues); sequence GKKKAKGKAKG. The span at 1868-1888 shows a compositional bias: acidic residues; that stretch reads FDDNSSFSEEEEDEEEEEEDS. Ser2274 bears the Phosphoserine mark. 3 disordered regions span residues 2317-2336, 2348-2383, and 2432-2472; these read SDCHSSFSDEDEDGPGLAAG, SSSSSGSSTSSSSGSVSTSSLCSSDNEDSSYSSDDE, and GAGS…ENRP. Residues 2348–2371 are compositionally biased toward low complexity; that stretch reads SSSSSGSSTSSSSGSVSTSSLCSS. Residues 2372 to 2383 are compositionally biased toward acidic residues; that stretch reads DNEDSSYSSDDE. A compositionally biased stretch (low complexity) spans 2432 to 2442; sequence GAGSGPSSSSK. The region spanning 2513-2633 is the BAH domain; the sequence is ETLRVGDCAV…PTTGRLVTAD (121 aa).

This is BAH and coiled-coil domain-containing protein 1 from Homo sapiens (Human).